The primary structure comprises 142 residues: Transcriptional regulator MraZ (142 aa).

2 consecutive SpoVT-AbrB domains span residues 5-51 (ASAL…PRPE) and 77-120 (AADV…DAAT).

The protein belongs to the MraZ family. As to quaternary structure, forms oligomers.

It localises to the cytoplasm. Its subcellular location is the nucleoid. This is Transcriptional regulator MraZ from Ralstonia nicotianae (strain ATCC BAA-1114 / GMI1000) (Ralstonia solanacearum).